Here is a 503-residue protein sequence, read N- to C-terminus: Probable cytosol aminopeptidase (503 aa).

Mn(2+) contacts are provided by lysine 274 and aspartate 279. Residue lysine 286 is part of the active site. Residues aspartate 297, aspartate 356, and glutamate 358 each coordinate Mn(2+). Arginine 360 is an active-site residue.

The protein belongs to the peptidase M17 family. The cofactor is Mn(2+).

It localises to the cytoplasm. The catalysed reaction is Release of an N-terminal amino acid, Xaa-|-Yaa-, in which Xaa is preferably Leu, but may be other amino acids including Pro although not Arg or Lys, and Yaa may be Pro. Amino acid amides and methyl esters are also readily hydrolyzed, but rates on arylamides are exceedingly low.. It carries out the reaction Release of an N-terminal amino acid, preferentially leucine, but not glutamic or aspartic acids.. Its function is as follows. Presumably involved in the processing and regular turnover of intracellular proteins. Catalyzes the removal of unsubstituted N-terminal amino acids from various peptides. In Burkholderia ambifaria (strain ATCC BAA-244 / DSM 16087 / CCUG 44356 / LMG 19182 / AMMD) (Burkholderia cepacia (strain AMMD)), this protein is Probable cytosol aminopeptidase.